Reading from the N-terminus, the 322-residue chain is Outer membrane protein assembly factor BamC (322 aa).

The signal sequence occupies residues 1 to 22 (MISLLAVAVLAGCSNPETRSQA).

It belongs to the BamC family. Part of the Bam complex.

The protein resides in the cell outer membrane. Its function is as follows. Part of the outer membrane protein assembly complex, which is involved in assembly and insertion of beta-barrel proteins into the outer membrane. The sequence is that of Outer membrane protein assembly factor BamC from Oceanimonas sp. (strain GK1 / IBRC-M 10197).